The primary structure comprises 388 residues: Phosphopentomutase (388 aa).

Mn(2+) is bound by residues Asp10, Asp282, His287, Asp323, His324, and His335.

This sequence belongs to the phosphopentomutase family. Requires Mn(2+) as cofactor.

Its subcellular location is the cytoplasm. The catalysed reaction is 2-deoxy-alpha-D-ribose 1-phosphate = 2-deoxy-D-ribose 5-phosphate. It catalyses the reaction alpha-D-ribose 1-phosphate = D-ribose 5-phosphate. It participates in carbohydrate degradation; 2-deoxy-D-ribose 1-phosphate degradation; D-glyceraldehyde 3-phosphate and acetaldehyde from 2-deoxy-alpha-D-ribose 1-phosphate: step 1/2. Functionally, isomerase that catalyzes the conversion of deoxy-ribose 1-phosphate (dRib-1-P) and ribose 1-phosphate (Rib-1-P) to deoxy-ribose 5-phosphate (dRib-5-P) and ribose 5-phosphate (Rib-5-P), respectively. The polypeptide is Phosphopentomutase (Desulfitobacterium hafniense (strain DSM 10664 / DCB-2)).